A 428-amino-acid polypeptide reads, in one-letter code: MFGLEDVHSVVRAVEKHHEWLKKCLPMIASENVTSPAVREMLVTDFGHRYAEGKPGERLYEGCEYIDEVELACVRLAKELFGAEHANVQPTSGVVANLAALFALTEPGDTILGLRISHGGHISHHDISAPGVRGLNVEYLPFDEEDMAIDVDGMVRKIEEVEPSVVMLGASLFLFPHPVEEAVEAVEAVGGYVVYDAAHVLGLIAGGQFQDPIREGAHVVTGSTHKTFPGPQGGIVLCQRDLADDIDEAVFPGLVSNHHLHHVAALAVALAEFKEYGERYARDTVRNAKALAEALYAEGLRVLCEHRGFTESHQIAVDVREQGGGAVIAEKLESANILCNKNLLPWDDESKSHDPSGIRLGTQELTRLGMGLSEMEYIAELIADVVLGRREPSEVRKDVEELRREFQEVKYGFGSGVGAHEWPRLADW.

120-122 is a binding site for (6S)-5,6,7,8-tetrahydrofolate; the sequence is GHI. At lysine 226 the chain carries N6-(pyridoxal phosphate)lysine.

It belongs to the SHMT family. Homodimer. Pyridoxal 5'-phosphate serves as cofactor.

It localises to the cytoplasm. It carries out the reaction 5,10-methylenetetrahydromethanopterin + glycine + H2O = 5,6,7,8-tetrahydromethanopterin + L-serine. It participates in amino-acid biosynthesis; glycine biosynthesis; glycine from L-serine: step 1/1. Catalyzes the reversible interconversion of serine and glycine with tetrahydromethanopterin (H4MPT) serving as the one-carbon carrier. Also exhibits a pteridine-independent aldolase activity toward beta-hydroxyamino acids, producing glycine and aldehydes, via a retro-aldol mechanism. The chain is Serine hydroxymethyltransferase from Methanopyrus kandleri (strain AV19 / DSM 6324 / JCM 9639 / NBRC 100938).